The chain runs to 282 residues: Dof zinc finger protein 4 (282 aa).

The segment at 45-99 (VKCPRCESTNTKFCYYNNYNLSQPRHFCKSCRRYWTKGGVLRNVPVGGGCRKTKR) adopts a Dof-type zinc-finger fold. 4 residues coordinate Zn(2+): cysteine 47, cysteine 50, cysteine 72, and cysteine 75. Residues 89-161 (PVGGGCRKTK…TTPATPSSNT (73 aa)) are disordered. Low complexity-rich tracts occupy residues 102–117 (SSSA…TAAT) and 125–161 (RASA…SSNT).

The protein resides in the nucleus. In terms of biological role, transcription factor that may transactivate seed storage protein genes in developing seeds. This chain is Dof zinc finger protein 4, found in Oryza sativa subsp. japonica (Rice).